Reading from the N-terminus, the 585-residue chain is A-type ATP synthase subunit A (585 aa).

231–238 (GPFGSGKT) is a binding site for ATP.

The protein belongs to the ATPase alpha/beta chains family. As to quaternary structure, has multiple subunits with at least A(3), B(3), C, D, E, F, H, I and proteolipid K(x).

The protein resides in the cell membrane. It carries out the reaction ATP + H2O + 4 H(+)(in) = ADP + phosphate + 5 H(+)(out). Its function is as follows. Component of the A-type ATP synthase that produces ATP from ADP in the presence of a proton gradient across the membrane. The A chain is the catalytic subunit. The chain is A-type ATP synthase subunit A from Thermococcus onnurineus (strain NA1).